The chain runs to 247 residues: NAD(P)H-quinone oxidoreductase subunit K, chloroplastic (247 aa).

The [4Fe-4S] cluster site is built by Cys64, Cys65, Cys129, and Cys160.

It belongs to the complex I 20 kDa subunit family. NDH is composed of at least 16 different subunits, 5 of which are encoded in the nucleus. The cofactor is [4Fe-4S] cluster.

The protein resides in the plastid. It localises to the chloroplast thylakoid membrane. It carries out the reaction a plastoquinone + NADH + (n+1) H(+)(in) = a plastoquinol + NAD(+) + n H(+)(out). The catalysed reaction is a plastoquinone + NADPH + (n+1) H(+)(in) = a plastoquinol + NADP(+) + n H(+)(out). NDH shuttles electrons from NAD(P)H:plastoquinone, via FMN and iron-sulfur (Fe-S) centers, to quinones in the photosynthetic chain and possibly in a chloroplast respiratory chain. The immediate electron acceptor for the enzyme in this species is believed to be plastoquinone. Couples the redox reaction to proton translocation, and thus conserves the redox energy in a proton gradient. This Mesostigma viride (Green alga) protein is NAD(P)H-quinone oxidoreductase subunit K, chloroplastic.